We begin with the raw amino-acid sequence, 84 residues long: Small ribosomal subunit protein eS27 (84 aa).

The segment covering 1-16 has biased composition (basic and acidic residues); sequence MPLAKDLLHPTPEEEK. The segment at 1 to 23 is disordered; sequence MPLAKDLLHPTPEEEKRKHKKKR. Residues 37-59 form a C4-type zinc finger; it reads CPGCYKITTVFSHAQTVVLCVGC.

Belongs to the eukaryotic ribosomal protein eS27 family. As to quaternary structure, component of the small ribosomal subunit. Part of the small subunit (SSU) processome, composed of more than 70 proteins and the RNA chaperone small nucleolar RNA (snoRNA) U3. Zn(2+) serves as cofactor.

The protein resides in the cytoplasm. Its subcellular location is the nucleus. It localises to the nucleolus. In terms of biological role, component of the small ribosomal subunit. The ribosome is a large ribonucleoprotein complex responsible for the synthesis of proteins in the cell. Required for proper rRNA processing and maturation of 18S rRNAs. Part of the small subunit (SSU) processome, first precursor of the small eukaryotic ribosomal subunit. During the assembly of the SSU processome in the nucleolus, many ribosome biogenesis factors, an RNA chaperone and ribosomal proteins associate with the nascent pre-rRNA and work in concert to generate RNA folding, modifications, rearrangements and cleavage as well as targeted degradation of pre-ribosomal RNA by the RNA exosome. This is Small ribosomal subunit protein eS27 (rps27) from Xenopus laevis (African clawed frog).